The sequence spans 37 residues: Large ribosomal subunit protein bL36 (37 aa).

The protein belongs to the bacterial ribosomal protein bL36 family.

The chain is Large ribosomal subunit protein bL36 from Nitratidesulfovibrio vulgaris (strain ATCC 29579 / DSM 644 / CCUG 34227 / NCIMB 8303 / VKM B-1760 / Hildenborough) (Desulfovibrio vulgaris).